Here is a 123-residue protein sequence, read N- to C-terminus: Kininogen (123 aa).

Bradykinin is released from kininogen by kallikrein. Post-translationally, N-glycosylated. Contains sulfated N-acetylglucosamine and O-acetylated sialic acids as terminal elements on biantennary and triantennary N-glycans.

Inhibits papain and ficin (cysteine proteinases) but not trypsin (a serine proteinase). The sequence is that of Kininogen from Gadus morhua (Atlantic cod).